Here is a 131-residue protein sequence, read N- to C-terminus: Small ribosomal subunit protein uS8c (131 aa).

Belongs to the universal ribosomal protein uS8 family. As to quaternary structure, part of the 30S ribosomal subunit.

The protein resides in the plastid. Its subcellular location is the chloroplast. Functionally, one of the primary rRNA binding proteins, it binds directly to 16S rRNA central domain where it helps coordinate assembly of the platform of the 30S subunit. The protein is Small ribosomal subunit protein uS8c (rps8) of Phalaenopsis aphrodite subsp. formosana (Moth orchid).